Here is a 333-residue protein sequence, read N- to C-terminus: Tubulin alpha chain (333 aa).

Ser-48, Gly-52, Thr-53, Thr-88, Asn-115, and Asn-137 together coordinate GTP.

It belongs to the tubulin family. In terms of assembly, dimer of alpha and beta chains. A typical microtubule is a hollow water-filled tube with an outer diameter of 25 nm and an inner diameter of 15 nM. Alpha-beta heterodimers associate head-to-tail to form protofilaments running lengthwise along the microtubule wall with the beta-tubulin subunit facing the microtubule plus end conferring a structural polarity. Microtubules usually have 13 protofilaments but different protofilament numbers can be found in some organisms and specialized cells. It depends on Mg(2+) as a cofactor. Undergoes a tyrosination/detyrosination cycle, the cyclic removal and re-addition of a C-terminal tyrosine residue by the enzymes tubulin tyrosine carboxypeptidase (TTCP) and tubulin tyrosine ligase (TTL), respectively.

It is found in the cytoplasm. Its subcellular location is the cytoskeleton. The enzyme catalyses GTP + H2O = GDP + phosphate + H(+). Its function is as follows. Tubulin is the major constituent of microtubules, a cylinder consisting of laterally associated linear protofilaments composed of alpha- and beta-tubulin heterodimers. Microtubules grow by the addition of GTP-tubulin dimers to the microtubule end, where a stabilizing cap forms. Below the cap, tubulin dimers are in GDP-bound state, owing to GTPase activity of alpha-tubulin. In Dictyostelium purpureum (Slime mold), this protein is Tubulin alpha chain (tuba).